Here is a 168-residue protein sequence, read N- to C-terminus: S-ribosylhomocysteine lyase (168 aa).

Fe cation is bound by residues His-54, His-58, and Cys-128.

Belongs to the LuxS family. In terms of assembly, homodimer. It depends on Fe cation as a cofactor.

The catalysed reaction is S-(5-deoxy-D-ribos-5-yl)-L-homocysteine = (S)-4,5-dihydroxypentane-2,3-dione + L-homocysteine. Functionally, involved in the synthesis of autoinducer 2 (AI-2) which is secreted by bacteria and is used to communicate both the cell density and the metabolic potential of the environment. The regulation of gene expression in response to changes in cell density is called quorum sensing. Catalyzes the transformation of S-ribosylhomocysteine (RHC) to homocysteine (HC) and 4,5-dihydroxy-2,3-pentadione (DPD). The chain is S-ribosylhomocysteine lyase from Neisseria meningitidis serogroup A / serotype 4A (strain DSM 15465 / Z2491).